A 36-amino-acid polypeptide reads, in one-letter code: Photosystem I reaction center subunit VIII (36 aa).

A helical transmembrane segment spans residues 6–28 (FPSVLVPLVGLVFPAMAMASLSL).

The protein belongs to the PsaI family.

It localises to the plastid. It is found in the chloroplast thylakoid membrane. In terms of biological role, may help in the organization of the PsaL subunit. The sequence is that of Photosystem I reaction center subunit VIII from Panax ginseng (Korean ginseng).